Consider the following 255-residue polypeptide: Type III pantothenate kinase (255 aa).

6–13 (DIGNTNIV) serves as a coordination point for ATP. Position 107–110 (107–110 (GSDC)) interacts with substrate. Catalysis depends on Asp-109, which acts as the Proton acceptor. Asp-129 contributes to the K(+) binding site. Residue Thr-132 coordinates ATP. Thr-184 serves as a coordination point for substrate.

It belongs to the type III pantothenate kinase family. As to quaternary structure, homodimer. The cofactor is NH4(+). It depends on K(+) as a cofactor.

It is found in the cytoplasm. It catalyses the reaction (R)-pantothenate + ATP = (R)-4'-phosphopantothenate + ADP + H(+). It functions in the pathway cofactor biosynthesis; coenzyme A biosynthesis; CoA from (R)-pantothenate: step 1/5. Functionally, catalyzes the phosphorylation of pantothenate (Pan), the first step in CoA biosynthesis. The sequence is that of Type III pantothenate kinase from Bifidobacterium longum subsp. infantis (strain ATCC 15697 / DSM 20088 / JCM 1222 / NCTC 11817 / S12).